A 158-amino-acid chain; its full sequence is Transcription elongation factor GreA (158 aa).

The stretch at 45–72 forms a coiled coil; that stretch reads AEYHAAREQQSFIEGRIKQLEGELSHAE.

It belongs to the GreA/GreB family.

Its function is as follows. Necessary for efficient RNA polymerase transcription elongation past template-encoded arresting sites. The arresting sites in DNA have the property of trapping a certain fraction of elongating RNA polymerases that pass through, resulting in locked ternary complexes. Cleavage of the nascent transcript by cleavage factors such as GreA or GreB allows the resumption of elongation from the new 3'terminus. GreA releases sequences of 2 to 3 nucleotides. This chain is Transcription elongation factor GreA, found in Xylella fastidiosa (strain 9a5c).